The following is a 631-amino-acid chain: Phosphomethylpyrimidine synthase (631 aa).

Substrate contacts are provided by residues N239, M268, Y297, H333, 353-355 (SRG), 394-397 (DGLR), and E433. H437 lines the Zn(2+) pocket. Y460 contributes to the substrate binding site. Residue H501 participates in Zn(2+) binding. Residues C581, C584, and C589 each coordinate [4Fe-4S] cluster.

It belongs to the ThiC family. Homodimer. It depends on [4Fe-4S] cluster as a cofactor.

It catalyses the reaction 5-amino-1-(5-phospho-beta-D-ribosyl)imidazole + S-adenosyl-L-methionine = 4-amino-2-methyl-5-(phosphooxymethyl)pyrimidine + CO + 5'-deoxyadenosine + formate + L-methionine + 3 H(+). It participates in cofactor biosynthesis; thiamine diphosphate biosynthesis. Functionally, catalyzes the synthesis of the hydroxymethylpyrimidine phosphate (HMP-P) moiety of thiamine from aminoimidazole ribotide (AIR) in a radical S-adenosyl-L-methionine (SAM)-dependent reaction. This chain is Phosphomethylpyrimidine synthase, found in Escherichia coli O6:K15:H31 (strain 536 / UPEC).